Reading from the N-terminus, the 407-residue chain is Peptidase T (407 aa).

His-82 provides a ligand contact to Zn(2+). The active site involves Asp-84. Asp-143 serves as a coordination point for Zn(2+). Catalysis depends on Glu-177, which acts as the Proton acceptor. Glu-178, Asp-200, and His-382 together coordinate Zn(2+).

It belongs to the peptidase M20B family. Requires Zn(2+) as cofactor.

The protein resides in the cytoplasm. The enzyme catalyses Release of the N-terminal residue from a tripeptide.. Cleaves the N-terminal amino acid of tripeptides. The protein is Peptidase T of Streptococcus equi subsp. equi (strain 4047).